A 368-amino-acid chain; its full sequence is Nicotinamide/nicotinic acid mononucleotide adenylyltransferase (368 aa).

Residues 1–14 (MHTMNGDNFANSFP) are compositionally biased toward polar residues. Positions 1 to 25 (MHTMNGDNFANSFPKNPLLSRNSSS) are disordered. The residue at position 36 (Ser36) is a Phosphoserine. Residues 47 to 78 (AKEHEERIRRPSVNRAWQKNSTSGGPSVSLEK) are disordered. The span at 61 to 72 (RAWQKNSTSGGP) shows a compositional bias: polar residues. 2 positions are modified to phosphoserine: Ser75 and Ser85. Residues Ser135 and Phe136 each coordinate NAD(+). Position 143 (His143) interacts with ATP. The NAD(+) site is built by Thr215, Gly250, Asp252, Trp263, Arg282, and Asn313. An ATP-binding site is contributed by 318–321 (TKVR).

The protein belongs to the eukaryotic NMN adenylyltransferase family. Requires a divalent metal cation as cofactor.

It is found in the cytoplasm. The protein resides in the nucleus. The enzyme catalyses beta-nicotinamide D-ribonucleotide + ATP + H(+) = diphosphate + NAD(+). The catalysed reaction is nicotinate beta-D-ribonucleotide + ATP + H(+) = deamido-NAD(+) + diphosphate. The protein operates within cofactor biosynthesis; NAD(+) biosynthesis; deamido-NAD(+) from nicotinate D-ribonucleotide: step 1/1. It functions in the pathway cofactor biosynthesis; NAD(+) biosynthesis; NAD(+) from nicotinamide D-ribonucleotide: step 1/1. In terms of biological role, catalyzes the formation of NAD(+) from nicotinamide mononucleotide (NMN) and ATP. Can also use the deamidated form; nicotinic acid mononucleotide (NaMN) as substrate to form deamido-NAD(+) (NaAD). Key enzyme in both de novo and salvage pathways for NAD(+) biosynthesis. The chain is Nicotinamide/nicotinic acid mononucleotide adenylyltransferase from Schizosaccharomyces pombe (strain 972 / ATCC 24843) (Fission yeast).